We begin with the raw amino-acid sequence, 80 residues long: WAP four-disulfide core domain protein 15B (80 aa).

The N-terminal stretch at 1–20 (MKLLGLSLLAVTILLCCNMA) is a signal peptide. The 48-residue stretch at 29–76 (VFSKPGYCPEYRVPCPFVLIPKCRRDKGCKDALKCCFFYCQMRCVDPW) folds into the WAP domain. 4 disulfides stabilise this stretch: cysteine 36/cysteine 64, cysteine 43/cysteine 68, cysteine 51/cysteine 63, and cysteine 57/cysteine 72.

As to expression, constitutively expressed in kidney and epididymis.

It localises to the secreted. In terms of biological role, antibacterial protein which inhibits the growth of E.coli and S.aureus. The protein is WAP four-disulfide core domain protein 15B (Wfdc15b) of Mus musculus (Mouse).